The primary structure comprises 969 residues: Isoleucine--tRNA ligase (969 aa).

The 'HIGH' region signature appears at 68-78 (PYANGNLHMGH). An L-isoleucyl-5'-AMP-binding site is contributed by Glu584. Positions 625–629 (KMSKS) match the 'KMSKS' region motif. ATP is bound at residue Lys628. Positions 938, 941, 958, and 961 each coordinate Zn(2+).

Belongs to the class-I aminoacyl-tRNA synthetase family. IleS type 1 subfamily. As to quaternary structure, monomer. Requires Zn(2+) as cofactor.

It is found in the cytoplasm. The catalysed reaction is tRNA(Ile) + L-isoleucine + ATP = L-isoleucyl-tRNA(Ile) + AMP + diphosphate. Its function is as follows. Catalyzes the attachment of isoleucine to tRNA(Ile). As IleRS can inadvertently accommodate and process structurally similar amino acids such as valine, to avoid such errors it has two additional distinct tRNA(Ile)-dependent editing activities. One activity is designated as 'pretransfer' editing and involves the hydrolysis of activated Val-AMP. The other activity is designated 'posttransfer' editing and involves deacylation of mischarged Val-tRNA(Ile). The polypeptide is Isoleucine--tRNA ligase (Prochlorococcus marinus (strain SARG / CCMP1375 / SS120)).